A 155-amino-acid chain; its full sequence is Small ribosomal subunit protein uS7cz/uS7cy (155 aa).

This sequence belongs to the universal ribosomal protein uS7 family. Part of the 30S ribosomal subunit.

The protein localises to the plastid. In terms of biological role, one of the primary rRNA binding proteins, it binds directly to 16S rRNA where it nucleates assembly of the head domain of the 30S subunit. The polypeptide is Small ribosomal subunit protein uS7cz/uS7cy (rps7-A) (Cuscuta exaltata (Tall dodder)).